A 500-amino-acid polypeptide reads, in one-letter code: TBC1 domain family member 10A (500 aa).

Basic and acidic residues predominate over residues 1-10 (MAKSSRENGP). The tract at residues 1–45 (MAKSSRENGPREPAAGGSLSGTRESLAQGPDAATADELSSLGSDS) is disordered. A phosphoserine mark is found at S39, S40, and S45. Residues 111-299 (GIPPSLRGRA…RVWDMFFCEG (189 aa)) form the Rab-GAP TBC domain. Disordered regions lie at residues 396-415 (AEPG…LPPD) and 420-500 (SSKA…DTYL). A Phosphoserine modification is found at S407. Polar residues predominate over residues 438–453 (TSAQLDKSPGLSQATV). A Phosphothreonine modification is found at T477. Residues 497-500 (DTYL) form a binding to the PDZ domain of EBP50 region.

Binds to the first PDZ domain of NHERF1 and NHERF2. Expressed in most tissues, except for skeletal muscle.

The protein localises to the cell projection. It is found in the microvillus. Its function is as follows. GTPase-activating protein (GAP) specific for RAB27A and RAB35. Does not show GAP activity for RAB2A, RAB3A and RAB4A. This Mus musculus (Mouse) protein is TBC1 domain family member 10A (Tbc1d10a).